The following is a 219-amino-acid chain: Probable transcriptional regulator flp (219 aa).

Residues aspartate 144 to glutamate 212 enclose the HTH crp-type domain. The H-T-H motif DNA-binding region spans lysine 191 to asparagine 210.

In Lacticaseibacillus casei (Lactobacillus casei), this protein is Probable transcriptional regulator flp (flp).